The chain runs to 512 residues: MGVIDMVLFWVLLVNALLIVDASSRNMPFAYQNEMQRHCSSTKYTSLCVQNLREFRHGSLDGLDFVSFLVNKTISDSNLLIPPLSSSMGSSKLVSLEDSTYTLPSPSVSDSCERLMKMSTRRLRQAMEALNGSSRKRHTKHDVQTWLSAAMTFQQACKDSILDSGGSSSASAISHISQKMDHLSRLVSNSLTLVDTIMKNPKPKTKSTALPRWVTAGERRLLVGRARAHVVVAKDGSGDYRTVMEAVTAAHGNGKDLTVIVGDDSATGGTSVPDTATMTVTGDGFIARDIGIKNIAGPRGHQAIALSITSDQSVLYRCSISGYQDTLYAAALRQFYRECDIYGTIDFIFGNAAAVFQSCNIFLRRPHGVKAYNVILANGRTDQRQNTGFALHSCRIRTDSDLSPVKHKYSSYLGRPWRKYSRAIVMESYIDDAIAEGGWAGWLDSGDEVLKTLYFGEFKNYGPKARISKRVTWEGFHSIGFEEANYFSVVKRRNGEDVTNGFKYKFKIKIQI.

Positions 1–24 (MGVIDMVLFWVLLVNALLIVDASS) are cleaved as a signal peptide. The interval 29 to 193 (FAYQNEMQRH…SRLVSNSLTL (165 aa)) is pectinesterase inhibitor 54. Asn71 and Asn131 each carry an N-linked (GlcNAc...) asparagine glycan. Residues 229–496 (HVVVAKDGSG…FSVVKRRNGE (268 aa)) form a pectinesterase 54 region. Substrate is bound at residue Gln302. Asp325 functions as the Proton donor; for pectinesterase activity in the catalytic mechanism. A disulfide bond links Cys339 and Cys359. Asp346 (nucleophile; for pectinesterase activity) is an active-site residue. Positions 415 and 417 each coordinate substrate.

In the N-terminal section; belongs to the PMEI family. The protein in the C-terminal section; belongs to the pectinesterase family. In terms of tissue distribution, expressed in siliques.

It is found in the secreted. It localises to the cell wall. It carries out the reaction [(1-&gt;4)-alpha-D-galacturonosyl methyl ester](n) + n H2O = [(1-&gt;4)-alpha-D-galacturonosyl](n) + n methanol + n H(+). The protein operates within glycan metabolism; pectin degradation; 2-dehydro-3-deoxy-D-gluconate from pectin: step 1/5. Its function is as follows. Acts in the modification of cell walls via demethylesterification of cell wall pectin. The chain is Probable pectinesterase/pectinesterase inhibitor 54 (PME54) from Arabidopsis thaliana (Mouse-ear cress).